The sequence spans 969 residues: Protein translocase subunit SecA (969 aa).

ATP is bound by residues Gln99, 117-121 (GEGKT), and Asp631.

It belongs to the SecA family. In terms of assembly, monomer and homodimer. Part of the essential Sec protein translocation apparatus which comprises SecA, SecYEG and auxiliary proteins SecDF. Other proteins may also be involved.

The protein localises to the cell inner membrane. It localises to the cytoplasm. The enzyme catalyses ATP + H2O + cellular proteinSide 1 = ADP + phosphate + cellular proteinSide 2.. Part of the Sec protein translocase complex. Interacts with the SecYEG preprotein conducting channel. Has a central role in coupling the hydrolysis of ATP to the transfer of proteins into and across the cell membrane, serving as an ATP-driven molecular motor driving the stepwise translocation of polypeptide chains across the membrane. This Chlamydia trachomatis serovar A (strain ATCC VR-571B / DSM 19440 / HAR-13) protein is Protein translocase subunit SecA.